Here is a 138-residue protein sequence, read N- to C-terminus: FUN14 domain-containing protein fndc-1 (138 aa).

2 consecutive transmembrane segments (helical) span residues 37–56 (PMVQLGVGAGFGTVTGYFVT) and 61–78 (LVAATVGISFLLAQFAIH). Asparagine 85 and asparagine 111 each carry an N-linked (GlcNAc...) asparagine glycan.

Belongs to the FUN14 family. As to expression, broadly expressed in somatic tissues. Expressed in the hermaphrodite spermatheca and male gonad. Expressed in spermatids, but not expressed in oocytes.

The protein resides in the mitochondrion outer membrane. In terms of biological role, mitophagy receptor which plays a role in paternal mitochondria degradation in embryos after the two-cell stage. The polypeptide is FUN14 domain-containing protein fndc-1 (Caenorhabditis elegans).